Here is a 382-residue protein sequence, read N- to C-terminus: Galactokinase (382 aa).

Residue 34–37 (EHTD) coordinates substrate. 124–130 (GAGLSSS) is a binding site for ATP. Ser130 and Glu162 together coordinate Mg(2+). Catalysis depends on Asp174, which acts as the Proton acceptor. Residue Tyr223 coordinates substrate.

Belongs to the GHMP kinase family. GalK subfamily.

The protein localises to the cytoplasm. It catalyses the reaction alpha-D-galactose + ATP = alpha-D-galactose 1-phosphate + ADP + H(+). It participates in carbohydrate metabolism; galactose metabolism. Functionally, catalyzes the transfer of the gamma-phosphate of ATP to D-galactose to form alpha-D-galactose-1-phosphate (Gal-1-P). This Escherichia coli O157:H7 (strain EC4115 / EHEC) protein is Galactokinase.